Reading from the N-terminus, the 427-residue chain is Trigger factor (427 aa).

Residues 163-248 (GDTVVIDFVG…VNEVKAKELP (86 aa)) form the PPIase FKBP-type domain.

The protein belongs to the FKBP-type PPIase family. Tig subfamily.

Its subcellular location is the cytoplasm. It catalyses the reaction [protein]-peptidylproline (omega=180) = [protein]-peptidylproline (omega=0). In terms of biological role, involved in protein export. Acts as a chaperone by maintaining the newly synthesized protein in an open conformation. Functions as a peptidyl-prolyl cis-trans isomerase. In Lactococcus lactis subsp. cremoris (strain MG1363), this protein is Trigger factor.